An 837-amino-acid polypeptide reads, in one-letter code: Periplasmic nitrate reductase (837 aa).

A signal peptide (tat-type signal) is located at residues Met-1–Ala-33. A 4Fe-4S Mo/W bis-MGD-type domain is found at Leu-44 to Asp-100. Positions 51, 54, 58, and 86 each coordinate [4Fe-4S] cluster. Mo-bis(molybdopterin guanine dinucleotide)-binding positions include Lys-88, Gln-155, Asn-180, Cys-184, Trp-217–Met-224, Ser-248–His-252, Gln-267–Asp-269, Met-378, Gln-382, Asn-488, Ser-514–Asp-515, Lys-537, Asp-564, and Thr-724–Ser-733. Trp-800 provides a ligand contact to substrate. Positions 808 and 825 each coordinate Mo-bis(molybdopterin guanine dinucleotide).

It belongs to the prokaryotic molybdopterin-containing oxidoreductase family. NasA/NapA/NarB subfamily. As to quaternary structure, component of the periplasmic nitrate reductase NapAB complex composed of NapA and NapB. It depends on [4Fe-4S] cluster as a cofactor. Mo-bis(molybdopterin guanine dinucleotide) serves as cofactor. Post-translationally, predicted to be exported by the Tat system. The position of the signal peptide cleavage has not been experimentally proven.

It is found in the periplasm. The enzyme catalyses 2 Fe(II)-[cytochrome] + nitrate + 2 H(+) = 2 Fe(III)-[cytochrome] + nitrite + H2O. Its function is as follows. Catalytic subunit of the periplasmic nitrate reductase complex NapAB. Receives electrons from NapB and catalyzes the reduction of nitrate to nitrite. The sequence is that of Periplasmic nitrate reductase from Rhodopseudomonas palustris (strain BisB18).